A 602-amino-acid polypeptide reads, in one-letter code: Elongation factor 4 (602 aa).

One can recognise a tr-type G domain in the interval 7–189 (ARLRNFCIIA…SVVDRIPPPK (183 aa)). Residues 19-24 (DHGKST) and 136-139 (NKVD) each bind GTP.

It belongs to the TRAFAC class translation factor GTPase superfamily. Classic translation factor GTPase family. LepA subfamily.

It is found in the cell inner membrane. It catalyses the reaction GTP + H2O = GDP + phosphate + H(+). Functionally, required for accurate and efficient protein synthesis under certain stress conditions. May act as a fidelity factor of the translation reaction, by catalyzing a one-codon backward translocation of tRNAs on improperly translocated ribosomes. Back-translocation proceeds from a post-translocation (POST) complex to a pre-translocation (PRE) complex, thus giving elongation factor G a second chance to translocate the tRNAs correctly. Binds to ribosomes in a GTP-dependent manner. This is Elongation factor 4 from Prochlorococcus marinus (strain SARG / CCMP1375 / SS120).